A 766-amino-acid chain; its full sequence is Slit homolog 2 protein (766 aa).

The first 30 residues, 1–30, serve as a signal peptide directing secretion; that stretch reads MSGIGWQTLSLSLALVLSILNKVAPHACPA. In terms of domain architecture, LRRNT spans 31–55; sequence QCSCSGSTVDCHGLALRIVPRNIPR. LRR repeat units lie at residues 56-77, 80-101, 104-125, 128-149, 152-173, and 176-197; these read NTERLDLNGNNITRITKTDFAG, HLRILQLMENKISTIERGAFHD, ELERLRLNRNNLQLFPELLFLG, KLYRLDLSENQIQAIPRKAFRG, DIKNLQLDYNQISCIEDGAFRA, and DLEVLTLNNNNITRLSVASFNH. A glycan (N-linked (GlcNAc...) asparagine) is linked at asparagine 66. Asparagine 186 carries an N-linked (GlcNAc...) asparagine glycan. In terms of domain architecture, LRRCT 1 spans 209 to 259; it reads NNLYCDCHLAWLSDWLRQRPRVGLYTQCMGPSHLRGHNVAEVQKREFVCSD. The region spanning 268–304 is the LRRNT 2 domain; it reads MAPSCSVLHCPIACTCSNNIVDCRGKGLTEIPTNLPE. An intrachain disulfide couples cysteine 281 to cysteine 290. LRR repeat units lie at residues 305 to 326, 329 to 350, 353 to 374, 377 to 398, and 401 to 422; these read TITEIRLEQNSIRVIPPGAFSP, KLRRLDLSNNQISELAPDAFQG, SLNSLVLYGNKITELPKSLFEG, SLQLLLLNANKINCLRVDAFQD, and NLNLLSLYDNKLQTVAKGTFSA. In terms of domain architecture, LRRCT 2 spans 434 to 484; that stretch reads NPFICDCHLKWLADYLHTNPIETSGARCTSPRRLANKRIGQIKSKKFRCSG. 4 disulfide bridges follow: cysteine 438–cysteine 461, cysteine 440–cysteine 482, cysteine 502–cysteine 508, and cysteine 506–cysteine 515. An LRRNT 3 domain is found at 493–529; the sequence is SGDCFADLACPEKCRCEGTTVDCSNQKLNKIPDHIPQ. 5 LRR repeats span residues 530-551, 555-576, 579-600, 603-624, and 627-648; these read YTAELRLNNNEFTVLEATGIFK, QLRKINLSNNKITDIEEGAFEG, GVNEILLTSNRLENVQHKMFKG, SLKTLMLRSNRISCVGNDSFTG, and SVRLLSLYDNQITTVAPGAFGT. An N-linked (GlcNAc...) asparagine glycan is attached at asparagine 560. Residue asparagine 619 is glycosylated (N-linked (GlcNAc...) asparagine). Residues 660–710 enclose the LRRCT 3 domain; sequence NPFNCNCHLAWLGEWLRRKRIVTGNPRCQKPYFLKEIPIQDVAIQDFTCDD. 4 cysteine pairs are disulfide-bonded: cysteine 664/cysteine 687, cysteine 666/cysteine 708, cysteine 723/cysteine 729, and cysteine 727/cysteine 736. Residues 714–750 enclose the LRRNT 4 domain; the sequence is DNSCSPLSRCPSECTCLDTVVRCSNKGLKVLPKGIPR.

As to quaternary structure, homodimer. Binds ROBO1 and ROBO2 with high affinity. Interacts with GREM1.

The protein localises to the secreted. Thought to act as molecular guidance cue in cellular migration, and function appears to be mediated by interaction with roundabout homolog receptors. During neural development involved in axonal navigation at the ventral midline of the neural tube and projection of axons to different regions. SLIT1 and SLIT2 seem to be essential for midline guidance in the forebrain by acting as repulsive signal preventing inappropriate midline crossing by axons projecting from the olfactory bulb. In spinal cord development may play a role in guiding commissural axons once they reached the floor plate by modulating the response to netrin. In vitro, silences the attractive effect of NTN1 but not its growth-stimulatory effect and silencing requires the formation of a ROBO1-DCC complex. May be implicated in spinal cord midline post-crossing axon repulsion. In vitro, only commissural axons that crossed the midline responded to SLIT2. In the developing visual system appears to function as repellent for retinal ganglion axons by providing a repulsion that directs these axons along their appropriate paths prior to, and after passage through, the optic chiasm. In vitro, collapses and repels retinal ganglion cell growth cones. Seems to play a role in branching and arborization of CNS sensory axons, and in neuronal cell migration. Seems to be involved in regulating leukocyte migration. The sequence is that of Slit homolog 2 protein (Slit2) from Rattus norvegicus (Rat).